Consider the following 1141-residue polypeptide: DNA polymerase 120R (1141 aa).

This sequence belongs to the DNA polymerase type-B family.

It carries out the reaction DNA(n) + a 2'-deoxyribonucleoside 5'-triphosphate = DNA(n+1) + diphosphate. In terms of biological role, DNA-directed DNA polymerase involved in viral DNA replication. This chain is DNA polymerase 120R, found in Invertebrate iridescent virus 3 (IIV-3).